We begin with the raw amino-acid sequence, 476 residues long: Bifunctional protein HldE (476 aa).

The ribokinase stretch occupies residues 1–318; it reads MFQYSAEFKQ…ENAIHGRSNT (318 aa). Residue 195–198 coordinates ATP; it reads NMSE. Asp-264 is an active-site residue. The interval 344–476 is cytidylyltransferase; sequence MTNGCFDILH…VISKIQQLKD (133 aa).

In the N-terminal section; belongs to the carbohydrate kinase PfkB family. The protein in the C-terminal section; belongs to the cytidylyltransferase family. As to quaternary structure, homodimer.

The enzyme catalyses D-glycero-beta-D-manno-heptose 7-phosphate + ATP = D-glycero-beta-D-manno-heptose 1,7-bisphosphate + ADP + H(+). The catalysed reaction is D-glycero-beta-D-manno-heptose 1-phosphate + ATP + H(+) = ADP-D-glycero-beta-D-manno-heptose + diphosphate. It participates in nucleotide-sugar biosynthesis; ADP-L-glycero-beta-D-manno-heptose biosynthesis; ADP-L-glycero-beta-D-manno-heptose from D-glycero-beta-D-manno-heptose 7-phosphate: step 1/4. It functions in the pathway nucleotide-sugar biosynthesis; ADP-L-glycero-beta-D-manno-heptose biosynthesis; ADP-L-glycero-beta-D-manno-heptose from D-glycero-beta-D-manno-heptose 7-phosphate: step 3/4. The protein operates within bacterial outer membrane biogenesis; LPS core biosynthesis. In terms of biological role, catalyzes the phosphorylation of D-glycero-D-manno-heptose 7-phosphate at the C-1 position to selectively form D-glycero-beta-D-manno-heptose-1,7-bisphosphate. Its function is as follows. Catalyzes the ADP transfer from ATP to D-glycero-beta-D-manno-heptose 1-phosphate, yielding ADP-D-glycero-beta-D-manno-heptose. The chain is Bifunctional protein HldE from Pasteurella multocida (strain Pm70).